Consider the following 113-residue polypeptide: uncharacterized protein (113 aa).

A helical transmembrane segment spans residues 7–29 (FFILIVLLFTVFSLKEFIPNTFC).

It localises to the membrane. This is an uncharacterized protein from Aquifex aeolicus (strain VF5).